Consider the following 480-residue polypeptide: Aspartyl/glutamyl-tRNA(Asn/Gln) amidotransferase subunit B (480 aa).

Belongs to the GatB/GatE family. GatB subfamily. Heterotrimer of A, B and C subunits.

The catalysed reaction is L-glutamyl-tRNA(Gln) + L-glutamine + ATP + H2O = L-glutaminyl-tRNA(Gln) + L-glutamate + ADP + phosphate + H(+). It carries out the reaction L-aspartyl-tRNA(Asn) + L-glutamine + ATP + H2O = L-asparaginyl-tRNA(Asn) + L-glutamate + ADP + phosphate + 2 H(+). Allows the formation of correctly charged Asn-tRNA(Asn) or Gln-tRNA(Gln) through the transamidation of misacylated Asp-tRNA(Asn) or Glu-tRNA(Gln) in organisms which lack either or both of asparaginyl-tRNA or glutaminyl-tRNA synthetases. The reaction takes place in the presence of glutamine and ATP through an activated phospho-Asp-tRNA(Asn) or phospho-Glu-tRNA(Gln). The polypeptide is Aspartyl/glutamyl-tRNA(Asn/Gln) amidotransferase subunit B (Streptococcus pneumoniae serotype 19F (strain G54)).